The primary structure comprises 570 residues: Potassium-transporting ATPase potassium-binding subunit (570 aa).

Helical transmembrane passes span alanine 7–leucine 27, alanine 65–leucine 85, proline 95–threonine 115, leucine 135–leucine 155, leucine 179–proline 199, leucine 254–phenylalanine 274, alanine 286–glutamate 306, glycine 383–glycine 403, isoleucine 422–leucine 442, leucine 489–glycine 509, and glycine 528–phenylalanine 548.

It belongs to the KdpA family. In terms of assembly, the system is composed of three essential subunits: KdpA, KdpB and KdpC.

It is found in the cell inner membrane. Part of the high-affinity ATP-driven potassium transport (or Kdp) system, which catalyzes the hydrolysis of ATP coupled with the electrogenic transport of potassium into the cytoplasm. This subunit binds the periplasmic potassium ions and delivers the ions to the membrane domain of KdpB through an intramembrane tunnel. The protein is Potassium-transporting ATPase potassium-binding subunit of Caulobacter vibrioides (strain ATCC 19089 / CIP 103742 / CB 15) (Caulobacter crescentus).